The primary structure comprises 92 residues: Small ribosomal subunit protein bS18c (92 aa).

It belongs to the bacterial ribosomal protein bS18 family. As to quaternary structure, part of the 30S ribosomal subunit.

It is found in the plastid. This is Small ribosomal subunit protein bS18c (rps18) from Epifagus virginiana (Beechdrops).